The sequence spans 218 residues: Small ribosomal subunit protein uS3 (218 aa).

A KH type-2 domain is found at Ser-2–Glu-71.

It belongs to the universal ribosomal protein uS3 family. Part of the 30S ribosomal subunit.

In terms of biological role, binds the lower part of the 30S subunit head. The polypeptide is Small ribosomal subunit protein uS3 (Pyrobaculum aerophilum (strain ATCC 51768 / DSM 7523 / JCM 9630 / CIP 104966 / NBRC 100827 / IM2)).